A 162-amino-acid chain; its full sequence is Novel acetylcholine receptor chaperone (162 aa).

Topologically, residues 1–5 are cytoplasmic; sequence MASPR. Residues 6–26 traverse the membrane as a helical segment; the sequence is TVTIVALSVTLGLFFVFMGTI. Residues 27–61 lie on the Lumenal side of the membrane; that stretch reads KLTPRLSKDAYSEMKRAYKSYVKALPALKKIGISS. A helical membrane pass occupies residues 62–82; that stretch reads VFLRKAIGSLELACGIVLTLV. Residues 83 to 88 lie on the Cytoplasmic side of the membrane; sequence PGRPKD. A helical transmembrane segment spans residues 89–109; it reads VANFILLLLVLIVLFFHQLVG. At 110 to 114 the chain is on the lumenal side; sequence DPLKR. The helical transmembrane segment at 115–131 threads the bilayer; it reads YAHALVFGILLTCRLLV. Topologically, residues 132-162 are cytoplasmic; that stretch reads SRQPEEEFPEKKLSRGNNGAHSREPIKMKVS. Residues 141 to 162 are disordered; that stretch reads EKKLSRGNNGAHSREPIKMKVS. Basic and acidic residues predominate over residues 152–162; that stretch reads HSREPIKMKVS.

This sequence belongs to the DoxX family.

It is found in the peroxisome membrane. The protein localises to the cytoplasmic vesicle. Its subcellular location is the endoplasmic reticulum membrane. Its function is as follows. Molecular chaperone which mediates the proper assembly and functional expression of the nicotinic acetylcholine receptors (nAChRs) throughout the brain. Essential for the proper folding, assembly, function and surface trafficking of alpha-7 (CHRNA7), alpha-4-beta-2, alpha-3-beta-2 and alpha-3-beta-4 receptors. This chain is Novel acetylcholine receptor chaperone (tmem35a), found in Xenopus tropicalis (Western clawed frog).